The chain runs to 185 residues: MKIINPILPIIENILGNLTALQAEGKITTQPIERVALQWYESERNILRKTTNTGREVAFRLLKEGQRLKHDDVVFISDELVIAIEILPSDVIVLSPKTLPEMARACYEIGNKHSPLFLDGDEVTLPYDKPMFEWLQAAGFHPQKAERRLSQALRANSAQGHGHSHSHSHDHHGYHHHGDGHWHKH.

A disordered region spans residues Leu153–His185. Residues Gly162 to His175 show a composition bias toward basic residues. The span at His176 to His185 shows a compositional bias: basic and acidic residues.

The protein belongs to the UreE family.

The protein resides in the cytoplasm. In terms of biological role, involved in urease metallocenter assembly. Binds nickel. Probably functions as a nickel donor during metallocenter assembly. This chain is Urease accessory protein UreE, found in Haemophilus influenzae (strain 86-028NP).